A 297-amino-acid polypeptide reads, in one-letter code: MEEPALVEGQSQLPSPHHNSLRKAMAAALVLDGESTMGRRKKKKKESRPESIIIYRSESETLDEEPGESEGGDQPKEEEGDDFIDYPMDDGVWNVPVDSRYVTLTGTITRGKKKGQMVDIHVTLTEKELQELTKPKASSRETTPGGRKACQLGADRGPHVVLWTLVCLPVVFLLSFVVSFYYGTITWYNIFLVYNEERTFWHKISCCPCLILCYPVLIMAMASSLGLYAAVVQLSWSWEAWWQAARDMEKGFCGWLCSKLGLEDCSPYSIVELLESDNISGNLSNKDATQEIETSAV.

Residues 1 to 84 are disordered; it reads MEEPALVEGQ…PKEEEGDDFI (84 aa). Over 1-159 the chain is Extracellular; the sequence is MEEPALVEGQ…CQLGADRGPH (159 aa). Positions 9–18 are enriched in polar residues; sequence GQSQLPSPHH. Positions 60–84 are enriched in acidic residues; that stretch reads ETLDEEPGESEGGDQPKEEEGDDFI. The chain crosses the membrane as a helical span at residues 160 to 180; that stretch reads VVLWTLVCLPVVFLLSFVVSF. Residues 181-210 lie on the Cytoplasmic side of the membrane; sequence YYGTITWYNIFLVYNEERTFWHKISCCPCL. The chain crosses the membrane as a helical span at residues 211–231; that stretch reads ILCYPVLIMAMASSLGLYAAV. The Extracellular segment spans residues 232 to 297; it reads VQLSWSWEAW…ATQEIETSAV (66 aa).

The protein resides in the membrane. The sequence is that of Transmembrane protein 169 (TMEM169) from Bos taurus (Bovine).